Here is a 506-residue protein sequence, read N- to C-terminus: Maturase K (506 aa).

Belongs to the intron maturase 2 family. MatK subfamily.

Its subcellular location is the plastid. The protein localises to the chloroplast. Its function is as follows. Usually encoded in the trnK tRNA gene intron. Probably assists in splicing its own and other chloroplast group II introns. The chain is Maturase K from Lactuca sativa (Garden lettuce).